We begin with the raw amino-acid sequence, 256 residues long: uncharacterized protein (256 aa).

Residue G29–T36 coordinates ATP.

This is an uncharacterized protein from Saccharomyces cerevisiae (strain ATCC 204508 / S288c) (Baker's yeast).